The primary structure comprises 113 residues: Large ribosomal subunit protein bL19 (113 aa).

This sequence belongs to the bacterial ribosomal protein bL19 family.

This protein is located at the 30S-50S ribosomal subunit interface and may play a role in the structure and function of the aminoacyl-tRNA binding site. The sequence is that of Large ribosomal subunit protein bL19 from Moorella thermoacetica (strain ATCC 39073 / JCM 9320).